Consider the following 609-residue polypeptide: Elongation factor 4 (609 aa).

The tr-type G domain maps to 5–187 (SKIRNFSIIA…AIVAKIPPPE (183 aa)). GTP-binding positions include 17-22 (DHGKST) and 134-137 (NKID).

The protein belongs to the TRAFAC class translation factor GTPase superfamily. Classic translation factor GTPase family. LepA subfamily.

It localises to the cell inner membrane. It carries out the reaction GTP + H2O = GDP + phosphate + H(+). Required for accurate and efficient protein synthesis under certain stress conditions. May act as a fidelity factor of the translation reaction, by catalyzing a one-codon backward translocation of tRNAs on improperly translocated ribosomes. Back-translocation proceeds from a post-translocation (POST) complex to a pre-translocation (PRE) complex, thus giving elongation factor G a second chance to translocate the tRNAs correctly. Binds to ribosomes in a GTP-dependent manner. The polypeptide is Elongation factor 4 (Erythrobacter litoralis (strain HTCC2594)).